We begin with the raw amino-acid sequence, 167 residues long: uncharacterized protein (167 aa).

This is an uncharacterized protein from Xenopus laevis (African clawed frog).